We begin with the raw amino-acid sequence, 461 residues long: tRNA modification GTPase MnmE (461 aa).

(6S)-5-formyl-5,6,7,8-tetrahydrofolate contacts are provided by R23, E84, and K123. Residues G219–A382 enclose the TrmE-type G domain. Residues N229 to T234, S248 to T254, D273 to G276, and N337 to D340 contribute to the GTP site. Residues S233 and T254 each contribute to the Mg(2+) site. Position 461 (K461) interacts with (6S)-5-formyl-5,6,7,8-tetrahydrofolate.

The protein belongs to the TRAFAC class TrmE-Era-EngA-EngB-Septin-like GTPase superfamily. TrmE GTPase family. As to quaternary structure, homodimer. Heterotetramer of two MnmE and two MnmG subunits. It depends on K(+) as a cofactor.

Its subcellular location is the cytoplasm. Its function is as follows. Exhibits a very high intrinsic GTPase hydrolysis rate. Involved in the addition of a carboxymethylaminomethyl (cmnm) group at the wobble position (U34) of certain tRNAs, forming tRNA-cmnm(5)s(2)U34. This Salinibacter ruber (strain DSM 13855 / M31) protein is tRNA modification GTPase MnmE.